The chain runs to 104 residues: Large ribosomal subunit protein uL24 (104 aa).

Belongs to the universal ribosomal protein uL24 family. As to quaternary structure, part of the 50S ribosomal subunit.

One of two assembly initiator proteins, it binds directly to the 5'-end of the 23S rRNA, where it nucleates assembly of the 50S subunit. Its function is as follows. One of the proteins that surrounds the polypeptide exit tunnel on the outside of the subunit. The sequence is that of Large ribosomal subunit protein uL24 from Azotobacter vinelandii (strain DJ / ATCC BAA-1303).